Consider the following 493-residue polypeptide: Glutamate synthase [NADPH] small chain (493 aa).

299–313 (GGGDTGADCVATALR) contributes to the NADP(+) binding site.

Belongs to the glutamate synthase family. As to quaternary structure, aggregate of 4 catalytic active heterodimers, consisting of a large and a small subunit.

The catalysed reaction is 2 L-glutamate + NADP(+) = L-glutamine + 2-oxoglutarate + NADPH + H(+). Its pathway is amino-acid biosynthesis; L-glutamate biosynthesis via GLT pathway; L-glutamate from 2-oxoglutarate and L-glutamine (NADP(+) route): step 1/1. It participates in energy metabolism; nitrogen metabolism. The polypeptide is Glutamate synthase [NADPH] small chain (gltB) (Bacillus subtilis (strain 168)).